Reading from the N-terminus, the 282-residue chain is Biotin synthase (282 aa).

One can recognise a Radical SAM core domain in the interval 1-228 (MQEIFLCSIS…NARLMVAGGR (228 aa)). Residues cysteine 17, cysteine 21, and cysteine 24 each coordinate [4Fe-4S] cluster. Residues cysteine 61, cysteine 96, cysteine 154, and arginine 221 each contribute to the [2Fe-2S] cluster site.

It belongs to the radical SAM superfamily. Biotin synthase family. As to quaternary structure, homodimer. Requires [4Fe-4S] cluster as cofactor. The cofactor is [2Fe-2S] cluster.

It carries out the reaction (4R,5S)-dethiobiotin + (sulfur carrier)-SH + 2 reduced [2Fe-2S]-[ferredoxin] + 2 S-adenosyl-L-methionine = (sulfur carrier)-H + biotin + 2 5'-deoxyadenosine + 2 L-methionine + 2 oxidized [2Fe-2S]-[ferredoxin]. The protein operates within cofactor biosynthesis; biotin biosynthesis; biotin from 7,8-diaminononanoate: step 2/2. Its function is as follows. Catalyzes the conversion of dethiobiotin (DTB) to biotin by the insertion of a sulfur atom into dethiobiotin via a radical-based mechanism. This is Biotin synthase from Helicobacter pylori (strain J99 / ATCC 700824) (Campylobacter pylori J99).